A 95-amino-acid polypeptide reads, in one-letter code: MGRSSKKGPYVDKKLLEKIRKLNETGEKKVIKTWSRASMIIPEMVGHTIAVYNGMKHIPVYITENMIGHRLGEFAPTRRFGGHADKKAKKGELKK.

Belongs to the universal ribosomal protein uS19 family.

Protein S19 forms a complex with S13 that binds strongly to the 16S ribosomal RNA. This Thermotoga sp. (strain RQ2) protein is Small ribosomal subunit protein uS19.